Reading from the N-terminus, the 248-residue chain is UPF0736 protein BCG9842_B4111 (248 aa).

It belongs to the UPF0736 family.

The chain is UPF0736 protein BCG9842_B4111 from Bacillus cereus (strain G9842).